A 459-amino-acid polypeptide reads, in one-letter code: Antizyme inhibitor 2 (459 aa).

Positions 117 to 140 (QVAQIKYAAKHGVRLLSFDNEVEL) are necessary for polyamine uptake stimulation.

This sequence belongs to the Orn/Lys/Arg decarboxylase class-II family. ODC antizyme inhibitor subfamily. As to quaternary structure, monomer. Interacts with OAZ1, OAZ2 and OAZ3; this interaction disrupts the interaction between the antizyme and ODC1. Does not form a heterodimer with ODC1. Ubiquitinated, leading to its proteasomal degradation; a process that is reduced in presence of antizymes. May also be degraded through the lysosomal degradative pathway in a proteasomal-independent manner. In terms of tissue distribution, expressed in the medulla and chromaffin cells of the adrenal gland. Expressed in the Langerhans islets of the pancreas. Expressed in the inner part of the seminiferous tubules and in spermatozoa located in the lumen of the epididymis of the testis. Expressed in the cortex, hippocampus and cerebellum of the brain. Expressed in normal and neoplastic mast cells (MC) (at protein level). Expressed in testis, pancreas and brain. Expressed throughout the differentiation process from spermatids to spermatozoa in the inner part of the seminiferous tubules. Expressed in the kidney: expressed in the superficial (Cs) and the deep layer (Cd) of the cortex region and in the outer stripe (OS), inner stripe (IS) and the inner medulla papilla (IM) of the medulla region.

It is found in the nucleus. It localises to the cytoplasm. The protein resides in the perinuclear region. The protein localises to the membrane. Its subcellular location is the cytoplasmic vesicle. It is found in the endoplasmic reticulum-Golgi intermediate compartment. It localises to the golgi apparatus. The protein resides in the cis-Golgi network. The protein localises to the trans-Golgi network. Its subcellular location is the cytoplasmic granule. It is found in the cell projection. It localises to the axon. The protein resides in the dendrite. The protein localises to the perikaryon. In terms of biological role, antizyme inhibitor (AZI) protein that positively regulates ornithine decarboxylase (ODC) activity and polyamine uptake. AZI is an enzymatically inactive ODC homolog that counteracts the negative effect of ODC antizymes (AZs) OAZ1, OAZ2 and OAZ3 on ODC activity by competing with ODC for antizyme-binding. Inhibits antizyme-dependent ODC degradation and releases ODC monomers from their inactive complex with antizymes, leading to formation of the catalytically active ODC homodimer and restoring polyamine production. Participates in the morphological integrity of the trans-Golgi network (TGN) and functions as a regulator of intracellular secretory vesicle trafficking. This chain is Antizyme inhibitor 2 (Azin2), found in Mus musculus (Mouse).